Here is a 456-residue protein sequence, read N- to C-terminus: MTVTIVGSQLGDEGKGGIVDVYGDAVDVVVRYQGGDNAGHTVVHEGDEYKLSLVPSGAVRGKVGVLGNGCVVNPETLFEELDALRERGLTPDVRVAERAHAILPYHRVLDGIEEDVKSDDDLAAGTTGRGIGPTYEDKAGRRGVRIGDLLDAETLRARLEYVVPQKRALVEDVYNLEIGDDIDADAFDVEALFEQYREFGRRLDEEGMTVNCGEFLNEHLDNGDEIMFEGAQGTSIDIDHGIYPYVTSSNPTAGAAAVGTGVGPTVVGRGEVVGIVKAYLSRVGTGPLPTELGSVDGQTPNNGGRPDESDLATYIRDEGGEYGTVTGRPRRVGWLDMPMLRHAARANGFTGLAVNHLDVLAGLEEVKVGHAYTLDGEQLLTMPATTEQWADCEAEFRSFDGWPDVDWGAVADEGYEALPENARTYLDYIADELDAPIYAVGVGPGREETVVVESPL.

Residues 11–17 and 39–41 each bind GTP; these read GDEGKGG and GHT. Asp-12 functions as the Proton acceptor in the catalytic mechanism. 2 residues coordinate Mg(2+): Asp-12 and Gly-39. Residues 12-15, 37-40, Thr-127, Arg-141, Gln-232, Thr-247, and Arg-328 contribute to the IMP site; these read DEGK and NAGH. His-40 functions as the Proton donor in the catalytic mechanism. 324–330 provides a ligand contact to substrate; it reads TVTGRPR. Residues Arg-330, 356 to 358, and 441 to 443 each bind GTP; these read HLD and GVG.

This sequence belongs to the adenylosuccinate synthetase family. In terms of assembly, homodimer. Requires Mg(2+) as cofactor.

The protein resides in the cytoplasm. It catalyses the reaction IMP + L-aspartate + GTP = N(6)-(1,2-dicarboxyethyl)-AMP + GDP + phosphate + 2 H(+). It participates in purine metabolism; AMP biosynthesis via de novo pathway; AMP from IMP: step 1/2. Its function is as follows. Plays an important role in the de novo pathway of purine nucleotide biosynthesis. Catalyzes the first committed step in the biosynthesis of AMP from IMP. The protein is Adenylosuccinate synthetase of Natronomonas pharaonis (strain ATCC 35678 / DSM 2160 / CIP 103997 / JCM 8858 / NBRC 14720 / NCIMB 2260 / Gabara) (Halobacterium pharaonis).